The primary structure comprises 747 residues: E3 UFM1-protein ligase 1 homolog (747 aa).

The segment at 403–468 (EKKKQCGSKA…GTVQVNSEEL (66 aa)) is disordered. Residues 429–438 (GGKGGKKGGK) show a composition bias toward basic residues. Residues 439-449 (GGKNGGGGGKG) show a composition bias toward gly residues. Over residues 450–465 (ATSSVPTGSGTVQVNS) the composition is skewed to polar residues.

Belongs to the UFL1 family.

In terms of biological role, E3 UFM1-protein ligase that mediates ufmylation of target proteins. The protein is E3 UFM1-protein ligase 1 homolog (ufl-1) of Caenorhabditis briggsae.